The primary structure comprises 460 residues: MLKEYKTVQEVVGPLMLVEGTKGVTYDELVEIELQTGEIRHGRVLEISEDKALIQLFEGSTGINLKETKTRFLGKPLEVGLSEDMLGRVFDGMGRPKDGGPKIIPEERRDINGEPLNPFARDYPSEFIQTGVSAIDGLNTLVRGQKLPVFSGSGLPHAELAAQIARQAKVLGSDSKFAVVFAAMGITFEEAQFFIQDFTKTGSIDRTVLFMNLANDPAVERIATPRIALTTAEFLAYEKGMHVLVIMTDMTNYAEALREVSAARKEVPGRRGYPGYLYTDLSTLYERAGRVKGKPGSITQIPILTMPEDDKTHPIPDLTGYITEGQIILSRELYKKGIMPPIDVLPSLSRLKDKGIGKDKTREDHADTMNQLFAGYAQGKQAKELAVILGESALSDIDKAYAKFADAFEKEYVSQGFNTNRSIEETLNLGWKLLKILPRTELKRIRDEYLEKYLDTKEGE.

It belongs to the ATPase alpha/beta chains family.

Produces ATP from ADP in the presence of a proton gradient across the membrane. The V-type beta chain is a regulatory subunit. The polypeptide is V-type ATP synthase beta chain (Clostridium novyi (strain NT)).